Here is a 461-residue protein sequence, read N- to C-terminus: Coronin-1A (461 aa).

S2 carries the post-translational modification N-acetylserine. At S2 the chain carries Phosphoserine; by PKC. WD repeat units lie at residues 13–63, 73–110, 123–160, 164–204, 207–251, 258–296, and 302–349; these read HVFG…LVLP, NVPL…MVWE, PVIT…LVWD, GAAV…RVIE, KGTV…ALWD, PLSL…RYFE, and PFLH…EPIA. A compositionally biased stretch (basic and acidic residues) spans 403 to 418; that stretch reads ELRVNRGLDSARRRAT. The interval 403–434 is disordered; the sequence is ELRVNRGLDSARRRATPEPSGTPSSDTVSRLE. S412 carries the post-translational modification Phosphoserine; by PKC. T418 is subject to Phosphothreonine. The segment covering 421-430 has biased composition (polar residues); the sequence is PSGTPSSDTV. A Phosphoserine modification is found at S422. Positions 424-461 form a coiled coil; it reads TPSSDTVSRLEEDVRNLNAIVQKLQERLDRLEETVQAK.

It belongs to the WD repeat coronin family. Binds actin. In terms of processing, phosphorylation at Ser-412 by PKC strongly down-regulates the association with actin. Post-translationally, polyubiquitinated by RNF128 with 'Lys-48'-linked chains, leading to proteasomal degradation. Expressed in spleen, lymph nodes, thymus, brain and at very lower levels in lung. Also expressed in cells of the lymphoid/myeloid lineage. Not expressed in Kuffper cells.

It is found in the cytoplasm. The protein resides in the cytoskeleton. It localises to the cell cortex. The protein localises to the cytoplasmic vesicle. Its subcellular location is the phagosome membrane. In terms of biological role, may be a crucial component of the cytoskeleton of highly motile cells, functioning both in the invagination of large pieces of plasma membrane, as well as in forming protrusions of the plasma membrane involved in cell locomotion. In mycobacteria-infected cells, its retention on the phagosomal membrane prevents fusion between phagosomes and lysosomes. This chain is Coronin-1A (Coro1a), found in Mus musculus (Mouse).